A 222-amino-acid polypeptide reads, in one-letter code: MPKTMHFLFRFIVFFYLWGLFTAQRQKKEERTEEVKIEVLHRPENCSKTSKKGDLLNAHYDGYLAKDGSKFYCSRTQNEGHPKWFVLGVGQVIKGLDIAMTDMCPGEKRKVVIPPSFAYGKEGYAEGKIPPDATLIFEIELYAVTKGPRSTETFKQIDMDSDRQLSKAEINLYLQREFEKDEKPRDKSYQDAVLEDIFKKNDHDGDGFISPKEYNVYQHDEL.

An N-terminal signal peptide occupies residues 1-23; the sequence is MPKTMHFLFRFIVFFYLWGLFTA. Residue asparagine 45 is glycosylated (N-linked (GlcNAc...) asparagine). A PPIase FKBP-type domain is found at 53-145; it reads GDLLNAHYDG…IFEIELYAVT (93 aa). EF-hand domains are found at residues 145 to 180 and 189 to 222; these read TKGP…EFEK and YQDA…HDEL. 9 residues coordinate Ca(2+): aspartate 158, aspartate 160, aspartate 162, glutamine 164, glutamate 169, aspartate 202, aspartate 204, aspartate 206, and glutamate 213. The short motif at 219 to 222 is the Prevents secretion from ER element; that stretch reads HDEL.

Post-translationally, glycosylated.

Its subcellular location is the endoplasmic reticulum lumen. The enzyme catalyses [protein]-peptidylproline (omega=180) = [protein]-peptidylproline (omega=0). In terms of biological role, PPIases accelerate the folding of proteins during protein synthesis. In Pongo abelii (Sumatran orangutan), this protein is Peptidyl-prolyl cis-trans isomerase FKBP7 (FKBP7).